A 183-amino-acid polypeptide reads, in one-letter code: GTP cyclohydrolase 1 (183 aa).

The Zn(2+) site is built by cysteine 71, histidine 74, and cysteine 142.

Belongs to the GTP cyclohydrolase I family. In terms of assembly, homomer.

The catalysed reaction is GTP + H2O = 7,8-dihydroneopterin 3'-triphosphate + formate + H(+). The protein operates within cofactor biosynthesis; 7,8-dihydroneopterin triphosphate biosynthesis; 7,8-dihydroneopterin triphosphate from GTP: step 1/1. The sequence is that of GTP cyclohydrolase 1 from Leptospira biflexa serovar Patoc (strain Patoc 1 / Ames).